A 393-amino-acid polypeptide reads, in one-letter code: Protein TsgA (393 aa).

Helical transmembrane passes span 11–31 (WISF…GMVM), 51–71 (FLNA…EIVP), 78–98 (FGFI…SLAL), 101–121 (AAMF…TFLI), 134–154 (LLFT…VAAF), 162–182 (WYWV…LTFG), 206–226 (IGVL…LGFI), 245–265 (ALVS…SFIL), 273–293 (ILTV…TGTQ), 298–318 (WFIL…ITLG), 332–352 (FILT…GPIV), and 361–381 (LLTA…LGFV).

Belongs to the major facilitator superfamily. TsgA family.

Its subcellular location is the cell inner membrane. The protein is Protein TsgA of Salmonella arizonae (strain ATCC BAA-731 / CDC346-86 / RSK2980).